We begin with the raw amino-acid sequence, 401 residues long: Nicotinate phosphoribosyltransferase (401 aa).

The residue at position 221 (histidine 221) is a Phosphohistidine; by autocatalysis.

The protein belongs to the NAPRTase family. Transiently phosphorylated on a His residue during the reaction cycle. Phosphorylation strongly increases the affinity for substrates and increases the rate of nicotinate D-ribonucleotide production. Dephosphorylation regenerates the low-affinity form of the enzyme, leading to product release.

The enzyme catalyses nicotinate + 5-phospho-alpha-D-ribose 1-diphosphate + ATP + H2O = nicotinate beta-D-ribonucleotide + ADP + phosphate + diphosphate. Its pathway is cofactor biosynthesis; NAD(+) biosynthesis; nicotinate D-ribonucleotide from nicotinate: step 1/1. Its function is as follows. Catalyzes the synthesis of beta-nicotinate D-ribonucleotide from nicotinate and 5-phospho-D-ribose 1-phosphate at the expense of ATP. This Serratia proteamaculans (strain 568) protein is Nicotinate phosphoribosyltransferase.